The following is a 493-amino-acid chain: Cobyric acid synthase (493 aa).

In terms of domain architecture, GATase cobBQ-type spans 252 to 440; it reads PVKIVVLRLR…IHGIFESDSL (189 aa). Cys-333 acts as the Nucleophile in catalysis. His-432 is an active-site residue.

Belongs to the CobB/CobQ family. CobQ subfamily.

It functions in the pathway cofactor biosynthesis; adenosylcobalamin biosynthesis. Functionally, catalyzes amidations at positions B, D, E, and G on adenosylcobyrinic A,C-diamide. NH(2) groups are provided by glutamine, and one molecule of ATP is hydrogenolyzed for each amidation. The protein is Cobyric acid synthase of Thermodesulfovibrio yellowstonii (strain ATCC 51303 / DSM 11347 / YP87).